The primary structure comprises 274 residues: RsbT co-antagonist protein RsbRA (274 aa).

The region spanning 150-265 (SAPLIPVFEN…KGIQTALEMT (116 aa)) is the STAS domain. 2 positions are modified to phosphothreonine: Thr-171 and Thr-205.

As to quaternary structure, interacts with RsbRB and RsbS in the stressosome. The stressosome probably also contains RsbRC and RsbRD. Post-translationally, phosphorylated by RsbT. This threonine phosphorylation abrogates the ability of RsbRA to stimulate RsbT in vitro.

Its function is as follows. Acts as a positive regulator of sigma-B activity in response to salt and heat stress by stimulating the activity of the RsbT kinase toward RsbS in vitro. Functionally, one of 4 functionally non-identical RsbR paralogs, it functions in the environmental signaling branch of the general stress response. In terms of biological role, negative regulator of sigma-B activity. Non-phosphorylated RsbS binds to RsbT, preventing its association with RsbU. Requires any one of RsbRA, RsbRB, RsbRC or RsbRD to sequester RsbT. When RsbS and the RsbR paralog(s) are phosphorylated, they release RsbT, which can then bind and activate RsbU. This is RsbT co-antagonist protein RsbRA (rsbRA) from Bacillus subtilis (strain 168).